Reading from the N-terminus, the 246-residue chain is Sulfate transporter CysZ (246 aa).

Helical transmembrane passes span 24-44 (LFVL…IGFA), 69-89 (IVWP…FTMV), 148-168 (LLVL…WILF), and 214-234 (LLIP…ATLF).

The protein belongs to the CysZ family.

Its subcellular location is the cell inner membrane. In terms of biological role, high affinity, high specificity proton-dependent sulfate transporter, which mediates sulfate uptake. Provides the sulfur source for the cysteine synthesis pathway. This is Sulfate transporter CysZ from Pseudomonas paraeruginosa (strain DSM 24068 / PA7) (Pseudomonas aeruginosa (strain PA7)).